We begin with the raw amino-acid sequence, 110 residues long: MNTLLLLAALSSQITFNTTQQGDVYTIIPEVTLTQSCLCRVQILSLREGSSGQSQTKQEKTLSLPANQPIALTKLSLNISPDDRVKIVVTVSDGQSLHLSQQWPPSSEKS.

The N-terminal stretch at 1 to 8 (MNTLLLLA) is a signal peptide.

It belongs to the CsgC/AgfC family.

The protein resides in the periplasm. Functionally, plays a role in the extracellular assembly of CsgA into thin aggregative fimbriae (Tafi) fibers. Assembly may also require CsgE. Tafi are thought to be assembled via an extracellular nucleation-precipitation (ENP) pathway, and possibly also via an intracellular non-CsgC-dependent pathway. This is Curli assembly protein CsgC (csgC) from Escherichia coli (strain K12).